The following is a 331-amino-acid chain: 5,10-methylenetetrahydromethanopterin reductase (331 aa).

Belongs to the mer family.

The protein localises to the cytoplasm. It carries out the reaction 5-methyl-5,6,7,8-tetrahydromethanopterin + oxidized coenzyme F420-(gamma-L-Glu)(n) + H(+) = 5,10-methylenetetrahydromethanopterin + reduced coenzyme F420-(gamma-L-Glu)(n). It participates in one-carbon metabolism; methanogenesis from CO(2); methyl-coenzyme M from 5,10-methylene-5,6,7,8-tetrahydromethanopterin: step 1/2. Catalyzes the reversible reduction of methylene-H(4)MPT to methyl-H(4)MPT. The chain is 5,10-methylenetetrahydromethanopterin reductase from Methanocaldococcus jannaschii (strain ATCC 43067 / DSM 2661 / JAL-1 / JCM 10045 / NBRC 100440) (Methanococcus jannaschii).